We begin with the raw amino-acid sequence, 152 residues long: Transcription elongation factor Spt5 (152 aa).

The region spanning 99–128 is the KOW domain; that stretch reads PGDVVEVISGPFRGTQAQVIRVEEAKGEVV.

The protein belongs to the archaeal Spt5 family. Heterodimer composed of Spt4 and Spt5. Interacts with RNA polymerase (RNAP).

Its function is as follows. Stimulates transcription elongation. The protein is Transcription elongation factor Spt5 of Saccharolobus solfataricus (strain ATCC 35092 / DSM 1617 / JCM 11322 / P2) (Sulfolobus solfataricus).